We begin with the raw amino-acid sequence, 363 residues long: Putative agmatine deiminase (363 aa).

Residues 1 to 10 (MTKQLSTSPK) show a composition bias toward polar residues. Residues 1–20 (MTKQLSTSPKQDGFRMPAEH) form a disordered region. The Amidino-cysteine intermediate role is filled by Cys-355.

This sequence belongs to the agmatine deiminase family.

The catalysed reaction is agmatine + H2O = N-carbamoylputrescine + NH4(+). The sequence is that of Putative agmatine deiminase from Photobacterium profundum (strain SS9).